Consider the following 287-residue polypeptide: MFRVGLFLATNLAILLLLGLVMSLLGLDSRSASGLLLMAGCFGMGGSLISLALSKWIAKKATGAHVIEQPRNGTEEWLLHTVARQAQTAGIGMPEVAVYEADDMNAFATGMRRDAALVAVSTGLIRGMSQDEVEAVLAHEMSHIANGDMVTLSLIQGVLNTFVIFLSRMAANVIDNFLSSDEDGGGLGFFGYMAVSMLLEFVFGLFASMIVMWFSRRREFRADYGATELASKQKMIAALARLQQQHISSSLPEQVAAFGIRPRQGGLAELFRSHPSLEDRIAALEAI.

Helical transmembrane passes span 4–24 (VGLFLATNLAILLLLGLVMSL) and 35–53 (LLLMAGCFGMGGSLISLAL). Position 139 (histidine 139) interacts with Zn(2+). Residue glutamate 140 is part of the active site. Histidine 143 lines the Zn(2+) pocket. A run of 2 helical transmembrane segments spans residues 147-167 (GDMVTLSLIQGVLNTFVIFLS) and 194-214 (AVSMLLEFVFGLFASMIVMWF). Residue glutamate 219 participates in Zn(2+) binding.

It belongs to the peptidase M48B family. The cofactor is Zn(2+).

It localises to the cell inner membrane. The sequence is that of Protease HtpX homolog from Desulfotalea psychrophila (strain LSv54 / DSM 12343).